The sequence spans 387 residues: Peptostreptococcal albumin-binding protein (387 aa).

The signal sequence occupies residues 1 to 26 (MKLNKKLLMAALAGAIVVGGGVNTFA). Residues 122–155 (LFDKHELGGLGKDKGPGRFDENGWENNEHGYETR) form a disordered region. The interval 213–265 (TIDQWLLKNAKEDAIAELKKAGITSDFYFNAINKAKTVEEVNALKNEILKAHA) is GA module. The interval 266 to 360 (GKEVNPSTPE…EKAALPEAGR (95 aa)) is disordered. A compositionally biased stretch (polar residues) spans 270 to 282 (NPSTPEVTPSVPQ). Basic and acidic residues predominate over residues 298-360 (GTKEDGKKEN…EKAALPEAGR (63 aa)). An LPXTG sorting signal motif is present at residues 355–359 (LPEAG). Ala-358 is subject to Pentaglycyl murein peptidoglycan amidated alanine. The propeptide at 359–387 (GRRKAEILTLAAASLSSVAGAFISLKKRK) is removed by sortase.

It localises to the secreted. Its subcellular location is the cell wall. Binds serum albumin. The sequence is that of Peptostreptococcal albumin-binding protein (pab) from Finegoldia magna (Peptostreptococcus magnus).